A 984-amino-acid chain; its full sequence is Putative formate dehydrogenase SAB2186c (984 aa).

The 2Fe-2S ferredoxin-type domain maps to 3 to 79; that stretch reads EHLVVTLDGK…PMTVNTVNND (77 aa). Positions 37, 48, 51, and 63 each coordinate [2Fe-2S] cluster. In terms of domain architecture, 4Fe-4S His(Cys)3-ligated-type spans 79–119; that stretch reads DVKDAQKEALDRILEKHMLYCTVCDYNNGDCEIHNTMDAWG. His-95, Cys-99, Cys-102, Cys-109, Cys-147, Cys-150, Cys-153, Cys-157, Cys-190, Cys-193, Cys-196, Cys-200, Cys-264, Cys-267, Cys-271, and Cys-299 together coordinate [4Fe-4S] cluster. 2 consecutive 4Fe-4S ferredoxin-type domains span residues 138–165 and 181–211; these read PFYRYDPNQCILCGRCVEACQDIEVNET and NDVPINESSCVSCGQCATVCPCNAMMEVNME. Residues 252–984 form a formate dehydrogenase region; the sequence is MRKERIKKTK…YVFPGNQVDK (733 aa). Residues 257-313 form the 4Fe-4S Mo/W bis-MGD-type domain; it reads IKKTKTVCTYCGVGCSFEVWTKDREILKVQPSHDSPANKIATCVKGKFSWGHINSDQ.

In the C-terminal section; belongs to the prokaryotic molybdopterin-containing oxidoreductase family. [2Fe-2S] cluster is required as a cofactor. It depends on [4Fe-4S] cluster as a cofactor. The cofactor is Mo-bis(molybdopterin guanine dinucleotide).

The enzyme catalyses formate + NAD(+) = CO2 + NADH. This is Putative formate dehydrogenase SAB2186c from Staphylococcus aureus (strain bovine RF122 / ET3-1).